Reading from the N-terminus, the 252-residue chain is MNTLLIIDGLNLVRRIHAAQPDENDINNVQQMTLLACTKMLKTHQPSHVIVVWDGDEESWRKKLYSDYKKGRKPMPEALKIALVGIRNTLSEAGIHSLEAESEADDVIATLATKMVENSGAAIIVSTDKGFSQLVKKNIQIWDHFKQLFLDISAHEKKLAVEQYQFLDFIALAGDSGNKIPGIAGIGPKSAADLLNKFRTLANIYNSLDNLGAKQAQKLAEGREMARISYKLGQLQCHMPLEINLKQFRVKK.

D105 contacts Mg(2+). The region spanning 162–251 (EQYQFLDFIA…EINLKQFRVK (90 aa)) is the 5'-3' exonuclease domain. 5 residues coordinate K(+): L172, A173, P181, I183, and I186. Residues 185–190 (GIGPKS) are interaction with DNA.

Belongs to the Xni family. The cofactor is Mg(2+). Requires K(+) as cofactor.

In terms of biological role, has flap endonuclease activity. During DNA replication, flap endonucleases cleave the 5'-overhanging flap structure that is generated by displacement synthesis when DNA polymerase encounters the 5'-end of a downstream Okazaki fragment. The polypeptide is Flap endonuclease Xni (Shewanella denitrificans (strain OS217 / ATCC BAA-1090 / DSM 15013)).